The following is a 352-amino-acid chain: Photosystem II D2 protein (352 aa).

The chain crosses the membrane as a helical span at residues 40–60 (CAYLALGGWLTGTTFVTSWYT). His-117 contacts chlorophyll a. The helical transmembrane segment at 124-140 (GFMLRQFEIAQSVRLRP) threads the bilayer. Pheophytin a contacts are provided by Gln-129 and Asn-142. Residues 152-165 (VFVSVFLIYPLGQS) form a helical membrane-spanning segment. His-197 contacts chlorophyll a. A helical membrane pass occupies residues 207-227 (AALLCAIHGATVENTLFEDGD). Positions 214 and 261 each coordinate a plastoquinone. Residue His-214 coordinates Fe cation. His-268 provides a ligand contact to Fe cation. A helical transmembrane segment spans residues 278 to 294 (GLWMSALGVVGLALNLR).

The protein belongs to the reaction center PufL/M/PsbA/D family. PSII is composed of 1 copy each of membrane proteins PsbA, PsbB, PsbC, PsbD, PsbE, PsbF, PsbH, PsbI, PsbJ, PsbK, PsbL, PsbM, PsbT, PsbY, PsbZ, Psb30/Ycf12, at least 3 peripheral proteins of the oxygen-evolving complex and a large number of cofactors. It forms dimeric complexes. Requires The D1/D2 heterodimer binds P680, chlorophylls that are the primary electron donor of PSII, and subsequent electron acceptors. It shares a non-heme iron and each subunit binds pheophytin, quinone, additional chlorophylls, carotenoids and lipids. There is also a Cl(-1) ion associated with D1 and D2, which is required for oxygen evolution. The PSII complex binds additional chlorophylls, carotenoids and specific lipids. as cofactor.

It localises to the plastid. The protein resides in the chloroplast thylakoid membrane. The catalysed reaction is 2 a plastoquinone + 4 hnu + 2 H2O = 2 a plastoquinol + O2. Its function is as follows. Photosystem II (PSII) is a light-driven water:plastoquinone oxidoreductase that uses light energy to abstract electrons from H(2)O, generating O(2) and a proton gradient subsequently used for ATP formation. It consists of a core antenna complex that captures photons, and an electron transfer chain that converts photonic excitation into a charge separation. The D1/D2 (PsbA/PsbD) reaction center heterodimer binds P680, the primary electron donor of PSII as well as several subsequent electron acceptors. D2 is needed for assembly of a stable PSII complex. In Bigelowiella natans (Pedinomonas minutissima), this protein is Photosystem II D2 protein.